The following is a 1013-amino-acid chain: Ephrin type-A receptor 5 (1013 aa).

The N-terminal stretch at M1–A31 is a signal peptide. The Extracellular segment spans residues S32–P549. The Eph LBD domain occupies E36–R214. Residues N240, N275, N345, N399, N412, and N437 are each glycosylated (N-linked (GlcNAc...) asparagine). 2 consecutive Fibronectin type-III domains span residues P333–A443 and A444–V538. Residues I550–L570 traverse the membrane as a helical segment. The Cytoplasmic portion of the chain corresponds to S571 to L1013. Phosphotyrosine; by autocatalysis is present on residues Y626 and Y632. A Protein kinase domain is found at I651–I912. Residues I657–V665 and K683 each bind ATP. The active-site Proton acceptor is the D776. 2 positions are modified to phosphotyrosine; by autocatalysis: Y809 and Y958. An SAM domain is found at G941–L1013. Positions V1011–L1013 match the PDZ-binding motif.

It belongs to the protein kinase superfamily. Tyr protein kinase family. Ephrin receptor subfamily. Heterotetramer upon binding of the ligand. The heterotetramer is composed of an ephrin dimer and a receptor dimer. Oligomerization is probably required to induce biological responses. In terms of processing, phosphorylated. Phosphorylation is stimulated by the ligand EFNA5. In terms of tissue distribution, detected in the 10-day embryonic brain, weaker expression in the rest of the 10-day embryo. Undetected in adult tissues.

The protein localises to the cell membrane. The protein resides in the cell projection. It localises to the axon. Its subcellular location is the dendrite. The catalysed reaction is L-tyrosyl-[protein] + ATP = O-phospho-L-tyrosyl-[protein] + ADP + H(+). Receptor tyrosine kinase which binds promiscuously GPI-anchored ephrin-A family ligands residing on adjacent cells, leading to contact-dependent bidirectional signaling into neighboring cells. The signaling pathway downstream of the receptor is referred to as forward signaling while the signaling pathway downstream of the ephrin ligand is referred to as reverse signaling. Among GPI-anchored ephrin-A ligands, EFNA5 most probably constitutes the cognate/functional ligand for EPHA5. Functions as an axon guidance molecule during development and may be involved in the development of the retinotectal, entorhino-hippocampal and hippocamposeptal pathways. Together with EFNA5 plays also a role in synaptic plasticity in adult brain through regulation of synaptogenesis. This Gallus gallus (Chicken) protein is Ephrin type-A receptor 5 (EPHA5).